Reading from the N-terminus, the 160-residue chain is SsrA-binding protein (160 aa).

A disordered region spans residues 1–23 (MARKKKQDKGQGPKTIAQNRRAR).

It belongs to the SmpB family.

The protein resides in the cytoplasm. In terms of biological role, required for rescue of stalled ribosomes mediated by trans-translation. Binds to transfer-messenger RNA (tmRNA), required for stable association of tmRNA with ribosomes. tmRNA and SmpB together mimic tRNA shape, replacing the anticodon stem-loop with SmpB. tmRNA is encoded by the ssrA gene; the 2 termini fold to resemble tRNA(Ala) and it encodes a 'tag peptide', a short internal open reading frame. During trans-translation Ala-aminoacylated tmRNA acts like a tRNA, entering the A-site of stalled ribosomes, displacing the stalled mRNA. The ribosome then switches to translate the ORF on the tmRNA; the nascent peptide is terminated with the 'tag peptide' encoded by the tmRNA and targeted for degradation. The ribosome is freed to recommence translation, which seems to be the essential function of trans-translation. This is SsrA-binding protein from Thermobifida fusca (strain YX).